Reading from the N-terminus, the 250-residue chain is Coproheme decarboxylase (250 aa).

Fe-coproporphyrin III contacts are provided by residues arginine 131, 145 to 149 (YPMNK), histidine 172, and glutamine 185. Tyrosine 145 is an active-site residue.

It belongs to the ChdC family. Type 1 subfamily. Fe-coproporphyrin III serves as cofactor.

The enzyme catalyses Fe-coproporphyrin III + 2 H2O2 + 2 H(+) = heme b + 2 CO2 + 4 H2O. The catalysed reaction is Fe-coproporphyrin III + H2O2 + H(+) = harderoheme III + CO2 + 2 H2O. It catalyses the reaction harderoheme III + H2O2 + H(+) = heme b + CO2 + 2 H2O. Its pathway is porphyrin-containing compound metabolism; protoheme biosynthesis. Involved in coproporphyrin-dependent heme b biosynthesis. Catalyzes the decarboxylation of Fe-coproporphyrin III (coproheme) to heme b (protoheme IX), the last step of the pathway. The reaction occurs in a stepwise manner with a three-propionate intermediate. The polypeptide is Coproheme decarboxylase (Staphylococcus aureus (strain USA300 / TCH1516)).